The primary structure comprises 185 residues: Putative gustatory receptor clone PTE01 (185 aa).

Residues 1–11 traverse the membrane as a helical segment; that stretch reads MYLFLSNLSLA. The Extracellular segment spans residues 12–42; it reads DISFTSTTLPKMIVDIQTNNRAISYSGCLTQ. The chain crosses the membrane as a helical span at residues 43 to 62; that stretch reads MSFFMLFGCLDSLLLTAMAY. Over 63–84 the chain is Cytoplasmic; sequence DRFVAICHPLHYQVIMNPRLCG. Residues 85–105 form a helical membrane-spanning segment; the sequence is LLVFLSILISLLVSQLHNSVV. At 106-138 the chain is on the extracellular side; it reads LQLTYFKSVDISHFFCDPSLLLNLACSDTFTNN. The chain crosses the membrane as a helical span at residues 139 to 160; sequence IVMYFVGAISGFLPISGIFFSY. The Cytoplasmic portion of the chain corresponds to 161–182; sequence YKIVSSILRMPSPGGKYKAFST. Residues 183 to 185 traverse the membrane as a helical segment; it reads CGS.

Belongs to the G-protein coupled receptor 1 family. In terms of tissue distribution, tongue specific.

The protein resides in the cell membrane. In terms of biological role, possible taste receptor. In Rattus norvegicus (Rat), this protein is Putative gustatory receptor clone PTE01.